Consider the following 783-residue polypeptide: Tripartite motif-containing protein 67 (783 aa).

The RING-type; degenerate zinc finger occupies 7-42; it reads CPVCGSLFREPIILPCSHNVCLPCARTIAVQTPDGE. Residues 206–253 form a B box-type 1; degenerate zinc finger; that stretch reads AICQLCDRTPPEPAATLCEQCDVLYCSACQLKCHPSRGPFAKHRLVQP. The tract at residues 247–295 is disordered; sequence KHRLVQPPPPPPPPAEAASGPTGTAQGAPSGGGGCKSPGGAGAGATGGS. Pro residues predominate over residues 252-261; it reads QPPPPPPPPA. The span at 275 to 293 shows a compositional bias: gly residues; the sequence is PSGGGGCKSPGGAGAGATG. A B box-type 2 zinc finger spans residues 298-340; it reads RKFPTCPEHEMENYSMYCVSCRTPVCYLCLEEGRHAKHEVKPL. Cys-303, His-306, Cys-326, and His-332 together coordinate Zn(2+). A coiled-coil region spans residues 345-382; it reads KQHKAQLSQALNGVSDKAKEAKEFLVQLKNILQQIQEN. Positions 448 to 506 constitute a COS domain; it reads IKENDPSGFLQISDALIKRVQVSQEQWVKGALEPKVSAEFDLTLDSEPLLQAIHQLDFI. The 95-residue stretch at 513 to 607 folds into the Fibronectin type-III domain; it reads PPVPLLQLEK…KTVVLQTSDV (95 aa). The B30.2/SPRY domain occupies 589 to 780; the sequence is NSSGVGPYSK…VPTNLGRPKL (192 aa).

It belongs to the TRIM/RBCC family.

The protein resides in the cytoplasm. It localises to the cytoskeleton. In Homo sapiens (Human), this protein is Tripartite motif-containing protein 67 (TRIM67).